Consider the following 107-residue polypeptide: HTH-type transcriptional regulator Rv2034 (107 aa).

The HTH arsR-type domain occupies 1–93 (MSTYRSPDRA…DLDRFWTRAL (93 aa)). The segment at residues 33-56 (VGELARDLPVSRPAVSQHLKVLKT) is a DNA-binding region (H-T-H motif).

Homodimer.

Its activity is regulated as follows. DNA-binding ability is not susceptible to zinc, nickel, cobalt, cadmium, lead, copper and manganese ions. Functionally, involved in the regulation of lipid metabolism and hypoxic response. Positively regulates transcription of various genes, such as phoP, groEL2 and dosR. Negatively regulates its own transcription. Acts by binding to a specific palindromic sequence motif in promoter regions. This Mycobacterium tuberculosis (strain ATCC 25618 / H37Rv) protein is HTH-type transcriptional regulator Rv2034.